Reading from the N-terminus, the 65-residue chain is Large ribosomal subunit protein bL35 (65 aa).

It belongs to the bacterial ribosomal protein bL35 family.

This Neisseria meningitidis serogroup A / serotype 4A (strain DSM 15465 / Z2491) protein is Large ribosomal subunit protein bL35.